The primary structure comprises 90 residues: Small ribosomal subunit protein uS17 (90 aa).

The protein belongs to the universal ribosomal protein uS17 family. Part of the 30S ribosomal subunit.

In terms of biological role, one of the primary rRNA binding proteins, it binds specifically to the 5'-end of 16S ribosomal RNA. The polypeptide is Small ribosomal subunit protein uS17 (Methylobacillus flagellatus (strain ATCC 51484 / DSM 6875 / VKM B-1610 / KT)).